Reading from the N-terminus, the 65-residue chain is Photosystem II reaction center protein J (65 aa).

Residues 35-55 (LWLVATAGGTAVIFVLGIFFY) traverse the membrane as a helical segment.

Belongs to the PsbJ family. PSII is composed of 1 copy each of membrane proteins PsbA, PsbB, PsbC, PsbD, PsbE, PsbF, PsbH, PsbI, PsbJ, PsbK, PsbL, PsbM, PsbT, PsbX, PsbY, Psb30/Ycf12, peripheral proteins PsbO, CyanoQ (PsbQ), PsbU, PsbV and a large number of cofactors. It forms dimeric complexes.

The protein localises to the cellular thylakoid membrane. Functionally, one of the components of the core complex of photosystem II (PSII). PSII is a light-driven water:plastoquinone oxidoreductase that uses light energy to abstract electrons from H(2)O, generating O(2) and a proton gradient subsequently used for ATP formation. It consists of a core antenna complex that captures photons, and an electron transfer chain that converts photonic excitation into a charge separation. In Prochlorococcus marinus (strain NATL2A), this protein is Photosystem II reaction center protein J.